A 204-amino-acid polypeptide reads, in one-letter code: N-(5'-phosphoribosyl)anthranilate isomerase (204 aa).

This sequence belongs to the TrpF family.

It catalyses the reaction N-(5-phospho-beta-D-ribosyl)anthranilate = 1-(2-carboxyphenylamino)-1-deoxy-D-ribulose 5-phosphate. It participates in amino-acid biosynthesis; L-tryptophan biosynthesis; L-tryptophan from chorismate: step 3/5. The polypeptide is N-(5'-phosphoribosyl)anthranilate isomerase (Syntrophomonas wolfei subsp. wolfei (strain DSM 2245B / Goettingen)).